The sequence spans 352 residues: Putative killer cell immunoglobulin-like receptor-like protein KIR3DX1 (352 aa).

Positions M1–N16 are cleaved as a signal peptide. Ig-like C2-type domains follow at residues Q17–K112 and P224–C311. Cystine bridges form between C49–C94 and C244–C295. N78 carries an N-linked (GlcNAc...) asparagine glycan.

In terms of tissue distribution, expressed in NK-cells.

It localises to the secreted. This is Putative killer cell immunoglobulin-like receptor-like protein KIR3DX1 (KIR3DX1) from Homo sapiens (Human).